A 523-amino-acid polypeptide reads, in one-letter code: REST corepressor 2 (523 aa).

The disordered stretch occupies residues 1 to 43 (MPSVMEKPSAGSGILSRSRAKTAPNGGQPHSEDDSSEEEHSHD). Residues 30–43 (HSEDDSSEEEHSHD) are compositionally biased toward basic and acidic residues. S31, S35, S36, and S63 each carry phosphoserine. In terms of domain architecture, ELM2 spans 44 to 129 (SMIRVGTNYQ…KSLADLANFT (86 aa)). A Glycyl lysine isopeptide (Lys-Gly) (interchain with G-Cter in SUMO2) cross-link involves residue K88. The region spanning 130-181 (PFPDEWTVEDKVLFEQAFGFHGKCFQRIQQMLPDKLIPSLVKYYYSWKKTRS) is the SANT 1 domain. The tract at residues 185–265 (VMDRQARRLG…RRRPPKGMYL (81 aa)) is disordered. S202 carries the post-translational modification Phosphoserine. Over residues 248-260 (YRHHPLRTRRRPP) the composition is skewed to basic residues. Residues 283 to 314 (TLRGLDSQLISLKRQVQSMKQTNSSLRQALEG) adopt a coiled-coil conformation. In terms of domain architecture, SANT 2 spans 327-378 (KFNSRWTTDEQLLAVQAIRRYGKDFGAIAEVIGNKTLTQVKTFFVSYRRRFN). The disordered stretch occupies residues 387-523 (EAEQDGAPTA…AQLEPPAPSL (137 aa)). Residues 432 to 459 (SVPPAPPPPPPPTSLSQPPPLLRPPLPT) show a composition bias toward pro residues. Positions 460-482 (APTLLRQPPPLQQGRFLQPRLAP) are enriched in low complexity. R479 bears the Asymmetric dimethylarginine mark.

This sequence belongs to the CoREST family.

It is found in the nucleus. May act as a component of a corepressor complex that represses transcription. This is REST corepressor 2 (Rcor2) from Rattus norvegicus (Rat).